A 344-amino-acid polypeptide reads, in one-letter code: Methionine import ATP-binding protein MetN (344 aa).

The region spanning 2 to 241 is the ABC transporter domain; it reads IEIRNLSQRF…PHHEVTRALI (240 aa). 38 to 45 provides a ligand contact to ATP; the sequence is GRSGAGKS.

Belongs to the ABC transporter superfamily. Methionine importer (TC 3.A.1.24) family. In terms of assembly, the complex is composed of two ATP-binding proteins (MetN), two transmembrane proteins (MetI) and a solute-binding protein (MetQ).

It is found in the cell inner membrane. The enzyme catalyses L-methionine(out) + ATP + H2O = L-methionine(in) + ADP + phosphate + H(+). It catalyses the reaction D-methionine(out) + ATP + H2O = D-methionine(in) + ADP + phosphate + H(+). Functionally, part of the ABC transporter complex MetNIQ involved in methionine import. Responsible for energy coupling to the transport system. The polypeptide is Methionine import ATP-binding protein MetN (Burkholderia thailandensis (strain ATCC 700388 / DSM 13276 / CCUG 48851 / CIP 106301 / E264)).